A 76-amino-acid polypeptide reads, in one-letter code: ATGSPVAECVEYFQSWRYTDVHNGCADAVSVTVEYTHGQWAPCRVIEPGGWATFAGYGTDGNYVTGLHTCDPATPS.

Disulfide bonds link Cys9–Cys25 and Cys43–Cys70.

Functionally, inhibits mammalian alpha-amylases specifically but has no action on plant and microbial alpha-amylases. The polypeptide is Alpha-amylase inhibitor Z-2685 (Streptomyces rochei (Streptomyces parvullus)).